We begin with the raw amino-acid sequence, 343 residues long: Dihydroorotate dehydrogenase (quinone) (343 aa).

Residues 61-65 and Thr85 each bind FMN; that span reads AGLDK. Lys65 serves as a coordination point for substrate. 110-114 contributes to the substrate binding site; the sequence is NRMGF. Residues Asn138 and Asn171 each coordinate FMN. Asn171 lines the substrate pocket. Ser174 serves as the catalytic Nucleophile. Asn176 is a substrate binding site. Residues Lys216 and Thr244 each contribute to the FMN site. 245-246 lines the substrate pocket; sequence NT. FMN-binding positions include Gly267, Gly296, and 317 to 318; that span reads YS.

The protein belongs to the dihydroorotate dehydrogenase family. Type 2 subfamily. Monomer. Requires FMN as cofactor.

Its subcellular location is the cell membrane. The enzyme catalyses (S)-dihydroorotate + a quinone = orotate + a quinol. Its pathway is pyrimidine metabolism; UMP biosynthesis via de novo pathway; orotate from (S)-dihydroorotate (quinone route): step 1/1. In terms of biological role, catalyzes the conversion of dihydroorotate to orotate with quinone as electron acceptor. The sequence is that of Dihydroorotate dehydrogenase (quinone) from Stutzerimonas stutzeri (strain A1501) (Pseudomonas stutzeri).